A 245-amino-acid polypeptide reads, in one-letter code: 1-(5-phosphoribosyl)-5-[(5-phosphoribosylamino)methylideneamino] imidazole-4-carboxamide isomerase (245 aa).

Aspartate 7 functions as the Proton acceptor in the catalytic mechanism. The active-site Proton donor is aspartate 129.

This sequence belongs to the HisA/HisF family.

The protein localises to the cytoplasm. The catalysed reaction is 1-(5-phospho-beta-D-ribosyl)-5-[(5-phospho-beta-D-ribosylamino)methylideneamino]imidazole-4-carboxamide = 5-[(5-phospho-1-deoxy-D-ribulos-1-ylimino)methylamino]-1-(5-phospho-beta-D-ribosyl)imidazole-4-carboxamide. It functions in the pathway amino-acid biosynthesis; L-histidine biosynthesis; L-histidine from 5-phospho-alpha-D-ribose 1-diphosphate: step 4/9. This Enterobacter sp. (strain 638) protein is 1-(5-phosphoribosyl)-5-[(5-phosphoribosylamino)methylideneamino] imidazole-4-carboxamide isomerase.